The chain runs to 358 residues: MAIKRSHNSPPATEENLLTPNPTIEETEKAAAEIRPQSLEDYIGQQDLKANLKVTIAAAKARQEAIDHLLFYGPPGLGKTTMALILAAEMGVNCRITAAPALERPRDITGILINLQPRDILFIDEIHRLNRVTEELLYPAMEDYRLDVTIGKGQAAKIRSISLPPFTLIGATTKVGSLTSPLRDRFGLIQRLRFYAVEELTAIILRSATIFNIPITEAGAIEIARRSRGTPRIANRLLKRVRDYVQVKGETIISPQLAAEGLNQLNVDSMGLDWTDRLVLKTMIQQFQGKPVGLEAVAAATGEDAKTIEEVYEPYLLQIGYLNRTPRGRVVTSAAYEHLGLLAKLPKNKDRSLPLFEF.

The disordered stretch occupies residues 1-24 (MAIKRSHNSPPATEENLLTPNPTI). Residues 8-22 (NSPPATEENLLTPNP) show a composition bias toward polar residues. The interval 13 to 195 (TEENLLTPNP…FGLIQRLRFY (183 aa)) is large ATPase domain (RuvB-L). ATP is bound by residues I34, R35, G76, K79, T80, T81, 142–144 (EDY), R185, Y195, and R232. T80 lines the Mg(2+) pocket. The interval 196-266 (AVEELTAIIL…LAAEGLNQLN (71 aa)) is small ATPAse domain (RuvB-S). The tract at residues 269–358 (SMGLDWTDRL…KDRSLPLFEF (90 aa)) is head domain (RuvB-H). DNA-binding residues include R324 and R329.

This sequence belongs to the RuvB family. As to quaternary structure, homohexamer. Forms an RuvA(8)-RuvB(12)-Holliday junction (HJ) complex. HJ DNA is sandwiched between 2 RuvA tetramers; dsDNA enters through RuvA and exits via RuvB. An RuvB hexamer assembles on each DNA strand where it exits the tetramer. Each RuvB hexamer is contacted by two RuvA subunits (via domain III) on 2 adjacent RuvB subunits; this complex drives branch migration. In the full resolvosome a probable DNA-RuvA(4)-RuvB(12)-RuvC(2) complex forms which resolves the HJ.

It localises to the cytoplasm. The catalysed reaction is ATP + H2O = ADP + phosphate + H(+). Functionally, the RuvA-RuvB-RuvC complex processes Holliday junction (HJ) DNA during genetic recombination and DNA repair, while the RuvA-RuvB complex plays an important role in the rescue of blocked DNA replication forks via replication fork reversal (RFR). RuvA specifically binds to HJ cruciform DNA, conferring on it an open structure. The RuvB hexamer acts as an ATP-dependent pump, pulling dsDNA into and through the RuvAB complex. RuvB forms 2 homohexamers on either side of HJ DNA bound by 1 or 2 RuvA tetramers; 4 subunits per hexamer contact DNA at a time. Coordinated motions by a converter formed by DNA-disengaged RuvB subunits stimulates ATP hydrolysis and nucleotide exchange. Immobilization of the converter enables RuvB to convert the ATP-contained energy into a lever motion, pulling 2 nucleotides of DNA out of the RuvA tetramer per ATP hydrolyzed, thus driving DNA branch migration. The RuvB motors rotate together with the DNA substrate, which together with the progressing nucleotide cycle form the mechanistic basis for DNA recombination by continuous HJ branch migration. Branch migration allows RuvC to scan DNA until it finds its consensus sequence, where it cleaves and resolves cruciform DNA. The protein is Holliday junction branch migration complex subunit RuvB of Microcystis aeruginosa (strain NIES-843 / IAM M-2473).